The chain runs to 102 residues: CRISPR-associated endoribonuclease Cas2 1 (102 aa).

Residue Asp-17 participates in Mg(2+) binding.

This sequence belongs to the CRISPR-associated endoribonuclease Cas2 protein family. In terms of assembly, homodimer, forms a heterotetramer with a Cas1 homodimer. It depends on Mg(2+) as a cofactor.

In terms of biological role, CRISPR (clustered regularly interspaced short palindromic repeat), is an adaptive immune system that provides protection against mobile genetic elements (viruses, transposable elements and conjugative plasmids). CRISPR clusters contain sequences complementary to antecedent mobile elements and target invading nucleic acids. CRISPR clusters are transcribed and processed into CRISPR RNA (crRNA). Functions as a ssRNA-specific endoribonuclease. Involved in the integration of spacer DNA into the CRISPR cassette. This is CRISPR-associated endoribonuclease Cas2 1 from Rhodospirillum rubrum (strain ATCC 11170 / ATH 1.1.1 / DSM 467 / LMG 4362 / NCIMB 8255 / S1).